The following is a 385-amino-acid chain: DNA replication and repair protein RecF (385 aa).

30–37 (GPNGYGKT) is a binding site for ATP.

The protein belongs to the RecF family.

Its subcellular location is the cytoplasm. Functionally, the RecF protein is involved in DNA metabolism; it is required for DNA replication and normal SOS inducibility. RecF binds preferentially to single-stranded, linear DNA. It also seems to bind ATP. This is DNA replication and repair protein RecF from Mycobacterium tuberculosis (strain ATCC 25177 / H37Ra).